The following is a 264-amino-acid chain: Isoprenyl transferase (264 aa).

Asp43 is an active-site residue. A Mg(2+)-binding site is contributed by Asp43. Substrate is bound by residues 44–47 (GNGR), Trp48, Arg56, His60, and 88–90 (STE). Catalysis depends on Asn91, which acts as the Proton acceptor. Residues Trp92, Arg94, Arg211, and 217 to 219 (RTS) each bind substrate. Glu230 contributes to the Mg(2+) binding site.

Belongs to the UPP synthase family. As to quaternary structure, homodimer. Mg(2+) serves as cofactor.

Functionally, catalyzes the condensation of isopentenyl diphosphate (IPP) with allylic pyrophosphates generating different type of terpenoids. This is Isoprenyl transferase from Bifidobacterium longum (strain NCC 2705).